The following is a 162-amino-acid chain: MMTALSDPRFTRAVSDDGSLATPFMKCLARLVRAHDSYGLWKDKCDAELLANFTVTEEQRRAIPVIGDPEPDVLLRLDLFYAAVGVVIEERSGLLISRTLEISDEGIGRVLFTTRRLVVLSKTLRDVHRFGFNTLGKCAKTGTKLVKDAIKSIETYPDVARA.

The protein belongs to the UPF0460 family.

This chain is UPF0460 protein y4xD, found in Sinorhizobium fredii (strain NBRC 101917 / NGR234).